The chain runs to 318 residues: Large ribosomal subunit protein uL10 (318 aa).

At Y24 the chain carries Phosphotyrosine. Residue T59 is modified to Phosphothreonine. Residue K264 forms a Glycyl lysine isopeptide (Lys-Gly) (interchain with G-Cter in ubiquitin) linkage. Residue K298 forms a Glycyl lysine isopeptide (Lys-Gly) (interchain with G-Cter in SUMO1); alternate linkage. K298 participates in a covalent cross-link: Glycyl lysine isopeptide (Lys-Gly) (interchain with G-Cter in SUMO2); alternate. Residues 298-318 (KVEAKEESEESDEDMGFGLFD) form a disordered region. Acidic residues predominate over residues 303-312 (EESEESDEDM). S305 and S308 each carry phosphoserine.

The protein belongs to the universal ribosomal protein uL10 family. P0 forms a pentameric complex by interaction with dimers of P1 and P2. Identified in a IGF2BP1-dependent mRNP granule complex containing untranslated mRNAs. Interacts with APEX1. Interacts with FMR1 isoform 6. In terms of processing, ubiquitinated at Lys-264 by RNF14 and RNF25 in response to ribosome collisions (ribosome stalling).

It localises to the nucleus. The protein resides in the cytoplasm. Its function is as follows. Ribosomal protein P0 is the functional equivalent of E.coli protein L10. The sequence is that of Large ribosomal subunit protein uL10 (RPLP0) from Oryctolagus cuniculus (Rabbit).